Reading from the N-terminus, the 118-residue chain is Beta-2-microglobulin (118 aa).

Residues 1–21 (MESRWGIVVIGLLCCVSWVEA) form the signal peptide. The region spanning 26–113 (PKIQVYTRSP…THNSVTKSVK (88 aa)) is the Ig-like C1-type domain. The cysteines at positions 46 and 101 are disulfide-linked.

The protein belongs to the beta-2-microglobulin family. In terms of assembly, heterodimer of an alpha chain and a beta chain. Beta-2-microglobulin is the beta-chain of major histocompatibility complex class I molecules.

The protein resides in the secreted. In terms of biological role, component of the class I major histocompatibility complex (MHC). Involved in the presentation of peptide antigens to the immune system. The protein is Beta-2-microglobulin (B2M) of Tachyglossus aculeatus aculeatus (Southeast Australian short-beaked echidna).